The chain runs to 122 residues: Large ribosomal subunit protein uL14 (122 aa).

This sequence belongs to the universal ribosomal protein uL14 family. As to quaternary structure, part of the 50S ribosomal subunit. Forms a cluster with proteins L3 and L19. In the 70S ribosome, L14 and L19 interact and together make contacts with the 16S rRNA in bridges B5 and B8.

Functionally, binds to 23S rRNA. Forms part of two intersubunit bridges in the 70S ribosome. This Novosphingobium aromaticivorans (strain ATCC 700278 / DSM 12444 / CCUG 56034 / CIP 105152 / NBRC 16084 / F199) protein is Large ribosomal subunit protein uL14.